Here is a 77-residue protein sequence, read N- to C-terminus: MQTINGNTDISPLMLASEYGQVTIVKYLLKHGNYNVKGWEKDNLHSDVSCQLTQITEISTLCEKANNPNHQYILETI.

The stretch at 8–38 (TDISPLMLASEYGQVTIVKYLLKHGNYNVKG) is one ANK repeat.

This is Putative ankyrin repeat protein RC0956 from Rickettsia conorii (strain ATCC VR-613 / Malish 7).